Reading from the N-terminus, the 488-residue chain is MSQAVETRTRIKSERYESGVIPYAKMGYWDPEYSIKETDILALFRCTPQPGVDPVEAAAALAGESSTATWTVVWTDLLTACDLYRAKAYRVDPVPSAADTYFCYIAYDIDLFEEGSLANLTASIIGNIFGFKAVKALRLEDMRMPYALLKTYQGPATGLIVERERLDKFGRPLLGATVKPKLGLSGKNYGRVVFEGLKGGLDFLKDDENINSQPFMRYRERFLYSMEGVNHAAAVSGEVKGHYLNATAATMEDMYERAEFAKDLGSVIVMIDLVIGYTAIQSMAIWARKTDMILHLHRAGNSTYSRQKSHGMNFRVICKWMRMSGVDHIHAGTVVGKLEGDPLMIKGFYNTLLEFKSDINLPQGLFFAQDWASLRKCVPVASGGIHCGQMHQLINYLGDDVVLQFGGGTIGHPDGIQAGATANRVALECMVIARNEGRDYISEGPQILRDAAKTCGPLQTALDLWKDITFNYASTDTADFVETPTANR.

Substrate is bound by residues Asn127 and Thr177. The Proton acceptor role is filled by Lys179. Lys181 lines the substrate pocket. Mg(2+) is bound by residues Lys205, Asp207, and Glu208. Lys205 is modified (N6-carboxylysine). His297 acts as the Proton acceptor in catalysis. Residues Arg298, His330, and Ser382 each contribute to the substrate site.

Belongs to the RuBisCO large chain family. Type I subfamily. Heterohexadecamer of 8 large chains and 8 small chains. Requires Mg(2+) as cofactor.

The protein resides in the plastid. It is found in the chloroplast. The catalysed reaction is 2 (2R)-3-phosphoglycerate + 2 H(+) = D-ribulose 1,5-bisphosphate + CO2 + H2O. It carries out the reaction D-ribulose 1,5-bisphosphate + O2 = 2-phosphoglycolate + (2R)-3-phosphoglycerate + 2 H(+). RuBisCO catalyzes two reactions: the carboxylation of D-ribulose 1,5-bisphosphate, the primary event in carbon dioxide fixation, as well as the oxidative fragmentation of the pentose substrate in the photorespiration process. Both reactions occur simultaneously and in competition at the same active site. This is Ribulose bisphosphate carboxylase large chain from Chrysotila carterae (Marine alga).